A 329-amino-acid polypeptide reads, in one-letter code: Secretory carrier-associated membrane protein 2 (329 aa).

Residues 1-74 (MSAFDTNPFA…PSVEPAQPTP (74 aa)) are disordered. The Cytoplasmic portion of the chain corresponds to 1 to 153 (MSAFDTNPFA…DYQRICKMLY (153 aa)). Polar residues-rich tracts occupy residues 19–31 (QDPS…NAPQ) and 40–51 (FSETNAATTVPA). A helical membrane pass occupies residues 154–174 (YLWMLHSVTLFLNLLACLAWF). The Lumenal portion of the chain corresponds to 175–181 (TSDAANG). The helical transmembrane segment at 182-202 (TAFGLSILWFLIFTPCAFLCW) threads the bilayer. The Cytoplasmic portion of the chain corresponds to 203 to 218 (YRPIYKAFRSDNSFSF). The interaction with SLC9A7 stretch occupies residues 203-218 (YRPIYKAFRSDNSFSF). Residues 219-239 (FVFFFVFFCQIGIYFIQLIGL) form a helical membrane-spanning segment. Over 240-262 (PNLGTSGWLAALSTMKNGPLAVT) the chain is Lumenal. Residues 263–283 (IIMMVVAGFFTLCAGLSLFLL) traverse the membrane as a helical segment. Over 284–329 (QRVHAFYRRTGASFQQAQEEFSQGIFSSRTFRGAASSAARGAFQGN) the chain is Cytoplasmic. 2 positions are modified to phosphoserine: Ser-319 and Ser-320.

Belongs to the SCAMP family. As to quaternary structure, interacts with SLC6A4 and SLC9A7. Interacts with SLC9A5; this interaction regulates SLC9A5 cell-surface targeting and SLC9A5 activity.

It is found in the golgi apparatus. The protein resides in the trans-Golgi network membrane. It localises to the recycling endosome membrane. Functions in post-Golgi recycling pathways. Acts as a recycling carrier to the cell surface. This Mus musculus (Mouse) protein is Secretory carrier-associated membrane protein 2 (Scamp2).